The chain runs to 385 residues: Trans-enoyl reductase poxH (385 aa).

An NADP(+)-binding site is contributed by 64–67; that stretch reads QPYS. 156–163 serves as a coordination point for substrate; that stretch reads PDPAAPPI. NADP(+) is bound by residues 199 to 202, 223 to 226, Tyr-241, and 289 to 290; these read STSV, SGTD, and LG. 309 to 313 serves as a coordination point for substrate; the sequence is HMAPL. 372–373 lines the NADP(+) pocket; the sequence is KR.

The protein belongs to the zinc-containing alcohol dehydrogenase family. As to quaternary structure, monomer.

The protein operates within secondary metabolite biosynthesis. Functionally, trans-enoyl reductase; part of the gene cluster that mediates the biosynthesis of oxaleimides, cytotoxic compounds containing an unusual disubstituted succinimide moiety. The first step of the pathway is provided by the HR-PKS poxF that serves in a new mode of collaborative biosynthesis with the PKS-NRPS poxE, by providing the olefin containing amino acid substrate via the synthesis of an ACP-bound dec-4-enoate. The cytochrome P450 monooxygenase poxM-catalyzed oxidation at the alpha-position creates the enzyme-bound 2-hydroxydec-4-enoyl-ACP thioester, which may be prone to spontaneous hydrolysis to yield 2-hydroxydec-4-enoic acid due to increased electrophilicity of the carbonyl. 2-hydroxydec-4-enoic acid can then be further oxidized by poxM to yield the alpha-ketoacid 2-oxodec-4-enoicacid, which is reductively aminated by the aminotransferase poxL to yield (S,E)-2-aminodec-4-enoic acid. The Hybrid PKS-NRPS synthetase poxE then performs condensation between the octaketide product of its PKS modules and the amino group of (S,E)-2-aminodec-4-enoic acid which is activated and incorporated by the adenylation domain. The resulting aminoacyl product can be cyclized by the Diels-Alderase PoxQ and reductively released by the reductive (R) domain of poxE to yield an aldehyde intermediate. The released aldehyde is then substrate for a Knoevenagel condensation by the hydrolyase poxO followed by an oxidation at the 5-position of the pyrrolidone ring. The presence of the olefin from the amino acid building block allows for migration of the substituted allyl group to occur. This allylic transposition reaction takes place in a conjugate addition, semipinacol-like fashion to yield a succinimide intermediate. Iterative two-electron oxidations of the C7 methyl of the succinimide intermediate to the carboxylic acid can be catalyzed by one of two remaining cytochrome P450 monooxygenasess poxC or poxD to yield oxaleimide A. Subsequent oxidation yields the maleimide scaffold oxaleimide I. Both oxaleimide A and oxaleimide I can undergo oxidative modifications in the decalin ring to yield the series of products oxaleimides B to H. In Penicillium oxalicum (strain 114-2 / CGMCC 5302) (Penicillium decumbens), this protein is Trans-enoyl reductase poxH.